We begin with the raw amino-acid sequence, 488 residues long: 3-octaprenyl-4-hydroxybenzoate carboxy-lyase (488 aa).

Asn172 provides a ligand contact to Mn(2+). Prenylated FMN is bound by residues 175–177 (IYR), 189–191 (RWL), and 194–195 (RG). Glu238 provides a ligand contact to Mn(2+). Asp287 serves as the catalytic Proton donor.

It belongs to the UbiD family. As to quaternary structure, homohexamer. Prenylated FMN serves as cofactor. It depends on Mn(2+) as a cofactor.

It localises to the cell membrane. It catalyses the reaction a 4-hydroxy-3-(all-trans-polyprenyl)benzoate + H(+) = a 2-(all-trans-polyprenyl)phenol + CO2. The protein operates within cofactor biosynthesis; ubiquinone biosynthesis. In terms of biological role, catalyzes the decarboxylation of 3-octaprenyl-4-hydroxy benzoate to 2-octaprenylphenol, an intermediate step in ubiquinone biosynthesis. The polypeptide is 3-octaprenyl-4-hydroxybenzoate carboxy-lyase (Pseudomonas fluorescens (strain SBW25)).